Reading from the N-terminus, the 364-residue chain is Mannose-1-phosphate guanyltransferase (364 aa).

It belongs to the transferase hexapeptide repeat family.

Its subcellular location is the cytoplasm. The enzyme catalyses alpha-D-mannose 1-phosphate + GTP + H(+) = GDP-alpha-D-mannose + diphosphate. Its pathway is nucleotide-sugar biosynthesis; GDP-alpha-D-mannose biosynthesis; GDP-alpha-D-mannose from alpha-D-mannose 1-phosphate (GTP route): step 1/1. Its function is as follows. Involved in cell wall synthesis where it is required for glycosylation. Involved in cell cycle progression through cell-size checkpoint. The sequence is that of Mannose-1-phosphate guanyltransferase (mpg1) from Aspergillus oryzae (strain ATCC 42149 / RIB 40) (Yellow koji mold).